Here is a 432-residue protein sequence, read N- to C-terminus: Transcriptional adapter 3 (432 aa).

Lys21 is covalently cross-linked (Glycyl lysine isopeptide (Lys-Gly) (interchain with G-Cter in SUMO2)). A coiled-coil region spans residues 40-69 (IEELDTLQLELETLLSSASRRLRVLEAETQ). The segment at 87-126 (GRDHELGAPPKHGKPKKQKLEGKAGHGPGPGPGRPKSKNL) is disordered. Residue Lys129 forms a Glycyl lysine isopeptide (Lys-Gly) (interchain with G-Cter in SUMO2) linkage. The tract at residues 272–319 (NIISPMEDSPIPDMSGKESGADGASTSPRNQNKPFSVPHTKSLESRIK) is disordered. 2 positions are modified to phosphoserine: Ser280 and Ser298. Over residues 295–305 (ASTSPRNQNKP) the composition is skewed to polar residues. Residues 367 to 407 (LLRLAKEEVSRQELRQRVRMADNEVMDAFRKIMAARQKKRT) are a coiled coil. The residue at position 418 (Lys418) is an N6-acetyllysine.

This sequence belongs to the NGG1 family. The PCAF complex is composed of a number of TBP-associated factors (TAFS), such as TAF5, TAF5L, TAF6, TAF6L, TAF9, TAF10 and TAF12, PCAF, and also PCAF-associated factors (PAFs), such as TADA2L/ADA2, TADA3L/ADA3 and SPT3. Interacts directly with TADA2L and PCAF and also with the high-risk HPV oncoprotein E6. Component of the STAGA transcription coactivator-HAT complex, at least composed of SUPT3H, GCN5L2, TAF5L, TAF6L, SUPT7L, TADA3L, TAD1L, TAF10, TAF12, TRRAP and TAF9. Component of the TFTC-HAT complex. Component of the ADA2A-containing complex (ATAC), composed of KAT14, KAT2A, TADA2L, TADA3L, ZZ3, MBIP, WDR5, YEATS2, CCDC101 and DR1. In terms of tissue distribution, ubiquitously expressed.

It is found in the nucleus. Functions as a component of the PCAF complex. The PCAF complex is capable of efficiently acetylating histones in a nucleosomal context. The PCAF complex could be considered as the human version of the yeast SAGA complex. Also known as a coactivator for p53/TP53-dependent transcriptional activation. Component of the ATAC complex, a complex with histone acetyltransferase activity on histones H3 and H4. The sequence is that of Transcriptional adapter 3 (TADA3) from Homo sapiens (Human).